The following is a 139-amino-acid chain: MAAAIQALLVLALLHLATATPVIGKQTVSTLSTGYLGHPVVGGLGYGGLGYGGLGVAGLGVAGLGYGGLGYPGAALGGVYTHHAAGLVHPYGGLGYHAAPYHHALGGLGYPLGIGAGVVAPHVVKGKIAAPLAPVVAAI.

Residues 1–19 (MAAAIQALLVLALLHLATA) form the signal peptide. 8 tandem repeats follow at residues 42–46 (GGLGY), 47–51 (GGLGY), 52–56 (GGLGV), 57–61 (AGLGV), 62–66 (AGLGY), 67–71 (GGLGY), 92–96 (GGLGY), and 106–110 (GGLGY). The tract at residues 42–110 (GGLGYGGLGY…YHHALGGLGY (69 aa)) is 8 X 5 AA approximate repeats.

In terms of assembly, the polymeric lamprin chains self-aggregate to form fibers and have secondary structures particularly rich in beta-sheets and in beta-turns.

The protein localises to the secreted. Its subcellular location is the extracellular space. It localises to the extracellular matrix. In terms of biological role, self-aggregating protein that is part of the soluble form of lamprin. The polypeptide is Lamprin 0.9 (Petromyzon marinus (Sea lamprey)).